Consider the following 414-residue polypeptide: Putative gustatory receptor 47b (414 aa).

The Cytoplasmic segment spans residues 1-5 (MQRDD). Residues 6-26 (GFVYCYGNLYSLLLYWGLVTI) form a helical membrane-spanning segment. The Extracellular portion of the chain corresponds to 27-40 (RVRSPDRGGAFSNR). The helical transmembrane segment at 41–61 (WTVCYALFTRSFMVICFMATV) threads the bilayer. The Cytoplasmic segment spans residues 62 to 142 (MTKLRDPEMS…QWNYRRARLK (81 aa)). Residues 143 to 163 (YWYGTVIVGFCFFSFSISLIF) traverse the membrane as a helical segment. The Extracellular portion of the chain corresponds to 164–182 (DTTRCTCGIPSTLLMAFTY). Residues 183 to 203 (TLLTSSVGLLGFVHIGIMDFI) form a helical membrane-spanning segment. Residues 204–249 (RVRLRLVQQLLHQLYQADDSSEVHERIAYLFEMSKRCSFLLAELNG) are Cytoplasmic-facing. The chain crosses the membrane as a helical span at residues 250–270 (VFGFAAAAGIFYDFTIMTCFV). The Extracellular segment spans residues 271 to 291 (YVICQKLLEREPWDPEYVYML). Residues 292–312 (LHVAIHTYKVVITSTYGYLLL) form a helical membrane-spanning segment. Topologically, residues 313 to 364 (REKRNCMHLLSQYSRYFSGQDVARRKTEDFQHWRMHNRQAAMVGSTTLLSVS) are cytoplasmic. A helical membrane pass occupies residues 365 to 385 (TIYLVYNGMANYVIILVQLLF). At 386–414 (QQQQIKDHQLTSGKDVDIVGPMGPITHMD) the chain is on the extracellular side.

This sequence belongs to the insect chemoreceptor superfamily. Gustatory receptor (GR) family. Gr57a subfamily. As to expression, expressed in neurons of the terminal external chemosensory organ of larvae.

The protein localises to the cell membrane. Functionally, probable gustatory receptor which mediates acceptance or avoidance behavior, depending on its substrates. The protein is Putative gustatory receptor 47b (Gr47b) of Drosophila melanogaster (Fruit fly).